The chain runs to 291 residues: 4-diphosphocytidyl-2-C-methyl-D-erythritol kinase (291 aa).

Lys-11 is an active-site residue. 95–105 (PVAAGLAGGSS) serves as a coordination point for ATP. The active site involves Asp-137.

Belongs to the GHMP kinase family. IspE subfamily.

It carries out the reaction 4-CDP-2-C-methyl-D-erythritol + ATP = 4-CDP-2-C-methyl-D-erythritol 2-phosphate + ADP + H(+). The protein operates within isoprenoid biosynthesis; isopentenyl diphosphate biosynthesis via DXP pathway; isopentenyl diphosphate from 1-deoxy-D-xylulose 5-phosphate: step 3/6. Catalyzes the phosphorylation of the position 2 hydroxy group of 4-diphosphocytidyl-2C-methyl-D-erythritol. This is 4-diphosphocytidyl-2-C-methyl-D-erythritol kinase from Alkaliphilus metalliredigens (strain QYMF).